A 212-amino-acid polypeptide reads, in one-letter code: Nitrile hydratase subunit beta (212 aa).

Belongs to the nitrile hydratase subunit beta family. Heterodimer of an alpha and a beta chain.

The catalysed reaction is an aliphatic primary amide = an aliphatic nitrile + H2O. Functionally, NHase catalyzes the hydration of various nitrile compounds to the corresponding amides. The polypeptide is Nitrile hydratase subunit beta (nthB) (Rhodococcus erythropolis (Arthrobacter picolinophilus)).